The sequence spans 294 residues: Mitochondrial glycine transporter (294 aa).

Solcar repeat units follow at residues 5–84, 102–186, and 208–292; these read RRAT…IRQA, LNMY…MKVL, and ASTL…IVKK. 6 helical membrane-spanning segments follow: residues 11 to 36, 59 to 85, 108 to 133, 161 to 184, 212 to 238, and 267 to 285; these read LIGGFSGGLVSAIILQPFDLLKTRLQ, GALPSCIRTSVGSAMYLTMLNSIRQAI, MFSGAVTRALTGLITMPITVIKVRYE, GFGATALRDAPYAGLYMLFYDRMK, INGSSAFSAAVIATSITAPFDTVKTRM, and GISLRLTRKAFSAGIAWGI.

This sequence belongs to the mitochondrial carrier (TC 2.A.29) family. SLC25A38 subfamily.

It localises to the mitochondrion inner membrane. It carries out the reaction glycine(in) = glycine(out). In terms of biological role, mitochondrial glycine transporter that imports glycine into the mitochondrial matrix. Plays an important role in providing glycine for the first enzymatic step in heme biosynthesis, the condensation of glycine with succinyl-CoA to produce 5-aminolevulinate (ALA) in the mitochondrial matrix. This Kluyveromyces lactis (strain ATCC 8585 / CBS 2359 / DSM 70799 / NBRC 1267 / NRRL Y-1140 / WM37) (Yeast) protein is Mitochondrial glycine transporter.